Here is a 326-residue protein sequence, read N- to C-terminus: Chitinase 12 (326 aa).

The N-terminal stretch at Met1–Ala21 is a signal peptide. Residues Glu22–Ala62 form the Chitin-binding type-1 domain. 8 disulfides stabilise this stretch: Cys24/Cys39, Cys33/Cys45, Cys36/Cys65, Cys38/Cys52, Cys56/Cys60, Cys102/Cys165, Cys179/Cys187, and Cys286/Cys318. Glu147 functions as the Proton donor in the catalytic mechanism.

It belongs to the glycosyl hydrolase 19 family. Chitinase class I subfamily. In terms of tissue distribution, expressed in meristems and at lower levels in roots and sheaths.

It carries out the reaction Random endo-hydrolysis of N-acetyl-beta-D-glucosaminide (1-&gt;4)-beta-linkages in chitin and chitodextrins.. In terms of biological role, hydrolyzes chitin and plays a role in defense against fungal pathogens containing chitin. Its overexpression confers enhanced resistance to sheath blight pathogen (R.solani). This is Chitinase 12 (Cht12) from Oryza sativa subsp. japonica (Rice).